Reading from the N-terminus, the 163-residue chain is Jun dimerization protein 2 (163 aa).

2 disordered regions span residues 1 to 20 (MMPG…PGLG) and 58 to 89 (GKRP…AARC). Lys65 participates in a covalent cross-link: Glycyl lysine isopeptide (Lys-Gly) (interchain with G-Cter in SUMO2). The region spanning 72–135 (EERRKRRREK…QQLILMLNRH (64 aa)) is the bZIP domain. A basic motif region spans residues 74–96 (RRKRRREKNKVAAARCRNKKKER). A leucine-zipper region spans residues 100 to 128 (LQRESERLELMNAELKTQIEELKQERQQL). Residue Thr148 is modified to Phosphothreonine; by MAPK8.

The protein belongs to the bZIP family. ATF subfamily. Forms a homodimer or heterodimer with JUN, JUNB, JUND, CEBPG and ATF2 thereby inhibiting transactivation by JUN, ATF2 and CEBPG. Binds multiple DNA elements such as cAMP-response element (CRE) and TPA response element (TRE) either as homodimer or heterodimer. Interacts with IRF2BP1. Post-translationally, phosphorylation of Thr-148 by MAPK8 in response to different stress conditions such as, UV irradiation, oxidatives stress and anisomycin treatments. Polyubiquitinated; probably by IRF2BP1.

The protein localises to the nucleus. Functionally, component of the AP-1 transcription factor that represses transactivation mediated by the Jun family of proteins. Involved in a variety of transcriptional responses associated with AP-1 such as UV-induced apoptosis, cell differentiation, tumorigenesis and antitumogeneris. Can also function as a repressor by recruiting histone deacetylase 3/HDAC3 to the promoter region of JUN. May control transcription via direct regulation of the modification of histones and the assembly of chromatin. This is Jun dimerization protein 2 (JDP2) from Homo sapiens (Human).